The chain runs to 488 residues: Cobyric acid synthase (488 aa).

One can recognise a GATase cobBQ-type domain in the interval 252–440 (VPLIAVLRFP…VHGLFANDRQ (189 aa)). Cys-334 (nucleophile) is an active-site residue. The active site involves His-432.

The protein belongs to the CobB/CobQ family. CobQ subfamily.

Its pathway is cofactor biosynthesis; adenosylcobalamin biosynthesis. Functionally, catalyzes amidations at positions B, D, E, and G on adenosylcobyrinic A,C-diamide. NH(2) groups are provided by glutamine, and one molecule of ATP is hydrogenolyzed for each amidation. The chain is Cobyric acid synthase from Methylorubrum populi (strain ATCC BAA-705 / NCIMB 13946 / BJ001) (Methylobacterium populi).